Reading from the N-terminus, the 821-residue chain is Palmitoyltransferase AKR1 (821 aa).

A disordered region spans residues 1-118; the sequence is MVDKDANNEL…KDTASRKSMD (118 aa). Over 1 to 400 the chain is Cytoplasmic; that stretch reads MVDKDANNEL…TIYLNPKIGK (400 aa). Basic and acidic residues predominate over residues 93–117; it reads IQDESVNDKTSEPDENKDTASRKSM. 6 ANK repeats span residues 142–172, 176–205, 213–243, 247–277, 289–318, and 322–351; these read PSLH…KAND, DGIT…SKAD, LKAS…DPTL, QSYN…STST, CDRT…DVSK, and NLFI…NIFA. A helical transmembrane segment spans residues 401–421; the sequence is LVTFFTPYIILPIMFQVCSFY. Residue N422 is a topological domain, lumenal. Residues 423–443 form a helical membrane-spanning segment; that stretch reads GFVIPKLFFSVVLFAGSIYIL. The Cytoplasmic portion of the chain corresponds to 444-463; the sequence is QKLVIPTYLAEEKAIPKSPL. The helical transmembrane segment at 464-484 threads the bilayer; that stretch reads LAGIFSGTAFWCIVTWAFNII. The Lumenal portion of the chain corresponds to 485 to 494; the sequence is PTLLFKKFIS. The chain crosses the membrane as a helical span at residues 495 to 515; sequence NLVLSAFIYLFVWSFFKAMFI. The Cytoplasmic portion of the chain corresponds to 516-589; the sequence is NPGYVPVPSD…YNDIGVRNHK (74 aa). A DHHC domain is found at 546 to 596; it reads NFCVNTFVRKPLRSKYSRFNKKLIARFDHYCPWVYNDIGVRNHKLFVVFVY. Catalysis depends on C576, which acts as the S-palmitoyl cysteine intermediate. Residues 590-610 traverse the membrane as a helical segment; it reads LFVVFVYSLNLAVLLFTHLSI. Topologically, residues 611-650 are lumenal; that stretch reads KLFKNTEKMSGYDSDDESQKCWLLSDELCVGYKSHHFQFN. Residues 651-671 form a helical membrane-spanning segment; that stretch reads LMLWCLIQYIWIAFLCLVQTF. At 672–821 the chain is on the cytoplasmic side; it reads QILKGLTTWE…YPPKLADVDA (150 aa).

Belongs to the DHHC palmitoyltransferase family. AKR/ZDHHC17 subfamily.

It is found in the early endosome membrane. The protein resides in the golgi apparatus membrane. It carries out the reaction L-cysteinyl-[protein] + hexadecanoyl-CoA = S-hexadecanoyl-L-cysteinyl-[protein] + CoA. Palmitoyltransferase specific for casein kinase 1. In Debaryomyces hansenii (strain ATCC 36239 / CBS 767 / BCRC 21394 / JCM 1990 / NBRC 0083 / IGC 2968) (Yeast), this protein is Palmitoyltransferase AKR1 (AKR1).